A 513-amino-acid polypeptide reads, in one-letter code: ATP synthase subunit alpha (513 aa).

ATP is bound at residue G169–T176.

Belongs to the ATPase alpha/beta chains family. In terms of assembly, F-type ATPases have 2 components, CF(1) - the catalytic core - and CF(0) - the membrane proton channel. CF(1) has five subunits: alpha(3), beta(3), gamma(1), delta(1), epsilon(1). CF(0) has three main subunits: a(1), b(2) and c(9-12). The alpha and beta chains form an alternating ring which encloses part of the gamma chain. CF(1) is attached to CF(0) by a central stalk formed by the gamma and epsilon chains, while a peripheral stalk is formed by the delta and b chains.

It is found in the cell inner membrane. The enzyme catalyses ATP + H2O + 4 H(+)(in) = ADP + phosphate + 5 H(+)(out). Produces ATP from ADP in the presence of a proton gradient across the membrane. The alpha chain is a regulatory subunit. This chain is ATP synthase subunit alpha, found in Francisella tularensis subsp. tularensis (strain SCHU S4 / Schu 4).